The primary structure comprises 504 residues: Chorion-specific transcription factor GCMb (504 aa).

A DNA-binding region (GCM) is located at residues 19 to 174; sequence LTWDINDPQM…KSETEGRRSA (156 aa). Zn(2+) is bound by residues Cys-81, Cys-87, Cys-91, Cys-118, Cys-121, Cys-130, His-157, and His-159. Composition is skewed to basic and acidic residues over residues 155–172 and 188–203; these read GVHDHPRPESKSETEGRR and RRSEEPEARSTQDIRG. Residues 155-203 are disordered; that stretch reads GVHDHPRPESKSETEGRRSALKRQMASFYQPQKRRSEEPEARSTQDIRG. A C-terminal conserved inhibitory domain (CCID) region spans residues 379 to 393; it reads LQTVITTTVAYQAYQ. A disordered region spans residues 438 to 472; it reads ASPSGRAPLKVPGDCQAPRPTLDFPQEADPSGTDG.

The protein resides in the nucleus. Its function is as follows. Transcription factor that binds specific sequences on gene promoters and activate their transcription. Through the regulation of gene transcription, may play a role in parathyroid gland development. This chain is Chorion-specific transcription factor GCMb, found in Mus musculus (Mouse).